A 357-amino-acid polypeptide reads, in one-letter code: DNA integrity scanning protein DisA (357 aa).

Residues 8–146 form the DAC domain; it reads VKSIINILQL…GNLRYTLKDI (139 aa). Residues glycine 75, leucine 93, and 106–110 contribute to the ATP site; that span reads MRHRT.

It belongs to the DisA family. In terms of assembly, homooctamer. Requires Mg(2+) as cofactor.

The enzyme catalyses 2 ATP = 3',3'-c-di-AMP + 2 diphosphate. In terms of biological role, participates in a DNA-damage check-point that is active prior to asymmetric division when DNA is damaged. DisA forms globular foci that rapidly scan along the chromosomes during sporulation, searching for lesions. When a lesion is present, DisA pauses at the lesion site. This triggers a cellular response that culminates in a temporary block in sporulation initiation. Functionally, also has diadenylate cyclase activity, catalyzing the condensation of 2 ATP molecules into cyclic di-AMP (c-di-AMP). c-di-AMP acts as a signaling molecule that couples DNA integrity with progression of sporulation. The rise in c-di-AMP level generated by DisA while scanning the chromosome, operates as a positive signal that advances sporulation; upon encountering a lesion, the DisA focus arrests at the damaged site and halts c-di-AMP synthesis. In Bacillus cereus (strain B4264), this protein is DNA integrity scanning protein DisA.